The following is a 432-amino-acid chain: Adenylosuccinate synthetase (432 aa).

Residues 13–19 and 41–43 contribute to the GTP site; these read GDEGKGK and GHT. The Proton acceptor role is filled by Asp-14. Asp-14 and Gly-41 together coordinate Mg(2+). IMP contacts are provided by residues 14-17, 39-42, Thr-130, Arg-144, Gln-225, Thr-240, and Arg-304; these read DEGK and NAGH. The active-site Proton donor is the His-42. 300–306 is a substrate binding site; that stretch reads ATTGRRR. Residues Arg-306, 332–334, and 415–417 each bind GTP; these read KLD and STG.

This sequence belongs to the adenylosuccinate synthetase family. Homodimer. Requires Mg(2+) as cofactor.

It localises to the cytoplasm. The catalysed reaction is IMP + L-aspartate + GTP = N(6)-(1,2-dicarboxyethyl)-AMP + GDP + phosphate + 2 H(+). The protein operates within purine metabolism; AMP biosynthesis via de novo pathway; AMP from IMP: step 1/2. In terms of biological role, plays an important role in the de novo pathway of purine nucleotide biosynthesis. Catalyzes the first committed step in the biosynthesis of AMP from IMP. The chain is Adenylosuccinate synthetase from Salmonella paratyphi A (strain AKU_12601).